The primary structure comprises 399 residues: Insertion element IS116 uncharacterized 44.8 kDa protein (399 aa).

It belongs to the transposase IS1111A/IS1328/IS1533 family.

The protein is Insertion element IS116 uncharacterized 44.8 kDa protein of Streptomyces clavuligerus.